Reading from the N-terminus, the 94-residue chain is Co-chaperonin GroES (94 aa).

Belongs to the GroES chaperonin family. In terms of assembly, heptamer of 7 subunits arranged in a ring. Interacts with the chaperonin GroEL.

The protein localises to the cytoplasm. In terms of biological role, together with the chaperonin GroEL, plays an essential role in assisting protein folding. The GroEL-GroES system forms a nano-cage that allows encapsulation of the non-native substrate proteins and provides a physical environment optimized to promote and accelerate protein folding. GroES binds to the apical surface of the GroEL ring, thereby capping the opening of the GroEL channel. This Brevibacillus brevis (strain 47 / JCM 6285 / NBRC 100599) protein is Co-chaperonin GroES.